We begin with the raw amino-acid sequence, 379 residues long: Class V chitinase (379 aa).

The signal sequence occupies residues 1-24; sequence MSSTKLISLIVSITFFLTLQCSMA. A GH18 domain is found at 27 to 369; that stretch reads VVKASYWFPA…RAASQAWDAT (343 aa). Residue Gly-99 coordinates chitin. Glu-140 (proton donor) is an active-site residue. Residue Tyr-259 coordinates chitin. Residues Asn-307 and Asn-327 are each glycosylated (N-linked (GlcNAc...) asparagine). Residue Trp-348 coordinates chitin.

This sequence belongs to the glycosyl hydrolase 18 family. Chitinase class V subfamily.

The enzyme catalyses Random endo-hydrolysis of N-acetyl-beta-D-glucosaminide (1-&gt;4)-beta-linkages in chitin and chitodextrins.. The catalysed reaction is Hydrolysis of N,N'-diacetylchitobiose from the non-reducing end of chitin and chitodextrins.. The protein operates within glycan degradation; chitin degradation. Its function is as follows. Can hydrolyze glycol chitin and chitin oligosaccharides (e.g. N-acetylglucosamine) (GlcNAc)4, (GlcNAc)5 and (GlcNAc)6. Hydrolyzes N-acetylglucosamine oligomers producing dimers from the non-reducing end of the substrates. The sequence is that of Class V chitinase from Arabidopsis thaliana (Mouse-ear cress).